A 382-amino-acid chain; its full sequence is Lipid-A-disaccharide synthase (382 aa).

This sequence belongs to the LpxB family.

It carries out the reaction 2-N,3-O-bis[(3R)-3-hydroxytetradecanoyl]-alpha-D-glucosaminyl 1-phosphate + UDP-2-N,3-O-bis[(3R)-3-hydroxytetradecanoyl]-alpha-D-glucosamine = lipid A disaccharide (E. coli) + UDP + H(+). It catalyses the reaction a lipid X + a UDP-2-N,3-O-bis[(3R)-3-hydroxyacyl]-alpha-D-glucosamine = a lipid A disaccharide + UDP + H(+). It participates in glycolipid biosynthesis; lipid IV(A) biosynthesis; lipid IV(A) from (3R)-3-hydroxytetradecanoyl-[acyl-carrier-protein] and UDP-N-acetyl-alpha-D-glucosamine: step 5/6. In terms of biological role, condensation of UDP-2,3-diacylglucosamine and 2,3-diacylglucosamine-1-phosphate to form lipid A disaccharide, a precursor of lipid A, a phosphorylated glycolipid that anchors the lipopolysaccharide to the outer membrane of the cell. The sequence is that of Lipid-A-disaccharide synthase from Serratia proteamaculans (strain 568).